A 352-amino-acid chain; its full sequence is Glycerol-1-phosphate dehydrogenase [NAD(P)+] (352 aa).

Residues 99-103 (GKSID) and 121-124 (TVAS) contribute to the NAD(+) site. Residue D126 participates in substrate binding. Residue S130 coordinates NAD(+). D173 contacts substrate. Positions 173 and 253 each coordinate Zn(2+). H257 serves as a coordination point for substrate. H269 provides a ligand contact to Zn(2+).

It belongs to the glycerol-1-phosphate dehydrogenase family. Homodimer. The cofactor is Zn(2+).

Its subcellular location is the cytoplasm. It catalyses the reaction sn-glycerol 1-phosphate + NAD(+) = dihydroxyacetone phosphate + NADH + H(+). It carries out the reaction sn-glycerol 1-phosphate + NADP(+) = dihydroxyacetone phosphate + NADPH + H(+). It functions in the pathway membrane lipid metabolism; glycerophospholipid metabolism. With respect to regulation, totally inhibited by EDTA in vitro. Catalyzes the NAD(P)H-dependent reduction of dihydroxyacetonephosphate (DHAP or glycerone phosphate) to glycerol 1-phosphate (G1P). The G1P thus generated is used as the glycerophosphate backbone of phospholipids in the cellular membranes of Archaea. Is also able to catalyze the reverse reaction, i.e. the NAD(+)-dependent oxidation of G1P but not of G3P. Is not active toward glycerol, dihydroxyacetone, glyceraldehyde phosphate, and glycerol-2-phosphate. In Aeropyrum pernix (strain ATCC 700893 / DSM 11879 / JCM 9820 / NBRC 100138 / K1), this protein is Glycerol-1-phosphate dehydrogenase [NAD(P)+] (egsA).